Consider the following 106-residue polypeptide: MTSATQFDNVSVVKRANVYFDGKCVSHTVLFPEGTRKTLGVILPCALNFGTDAPELMEVQAGKCRVKLDGSSEWQTYGAGESFSVPGKSRFDIEVLETLDYVCSYL.

It belongs to the nucleoside phosphorylase PpnP family.

It carries out the reaction a purine D-ribonucleoside + phosphate = a purine nucleobase + alpha-D-ribose 1-phosphate. The enzyme catalyses adenosine + phosphate = alpha-D-ribose 1-phosphate + adenine. It catalyses the reaction cytidine + phosphate = cytosine + alpha-D-ribose 1-phosphate. The catalysed reaction is guanosine + phosphate = alpha-D-ribose 1-phosphate + guanine. It carries out the reaction inosine + phosphate = alpha-D-ribose 1-phosphate + hypoxanthine. The enzyme catalyses thymidine + phosphate = 2-deoxy-alpha-D-ribose 1-phosphate + thymine. It catalyses the reaction uridine + phosphate = alpha-D-ribose 1-phosphate + uracil. The catalysed reaction is xanthosine + phosphate = alpha-D-ribose 1-phosphate + xanthine. Its function is as follows. Catalyzes the phosphorolysis of diverse nucleosides, yielding D-ribose 1-phosphate and the respective free bases. Can use uridine, adenosine, guanosine, cytidine, thymidine, inosine and xanthosine as substrates. Also catalyzes the reverse reactions. The polypeptide is Pyrimidine/purine nucleoside phosphorylase (Burkholderia ambifaria (strain ATCC BAA-244 / DSM 16087 / CCUG 44356 / LMG 19182 / AMMD) (Burkholderia cepacia (strain AMMD))).